Here is a 141-residue protein sequence, read N- to C-terminus: Large ribosomal subunit protein uL11c (141 aa).

The protein belongs to the universal ribosomal protein uL11 family. Part of the ribosomal stalk of the 50S ribosomal subunit. Interacts with L10 and the large rRNA to form the base of the stalk. L10 forms an elongated spine to which L12 dimers bind in a sequential fashion forming a multimeric L10(L12)X complex.

Its subcellular location is the plastid. It is found in the chloroplast. Its function is as follows. Forms part of the ribosomal stalk which helps the ribosome interact with GTP-bound translation factors. The polypeptide is Large ribosomal subunit protein uL11c (Thalassiosira pseudonana (Marine diatom)).